Consider the following 183-residue polypeptide: Putative 3-methyladenine DNA glycosylase (183 aa).

This sequence belongs to the DNA glycosylase MPG family.

This Rickettsia africae (strain ESF-5) protein is Putative 3-methyladenine DNA glycosylase.